Reading from the N-terminus, the 240-residue chain is MNAEKSPENHNVDHEEIAKFEAVASRWWDLEGEFKPLHRINPLRLGYIAERAGGLFGKKVLDVGCGGGILAESMAREGATVTGLDMGFEPLQVAKLHALESGIQVDYVQETVEEHAAKHAGQYDVVTCMEMLEHVPDPQSVVRACAQLVKPGGDVFFSTLNRNGKSWLMAVVGAEYILRMVPKGTHDVKKFIKPAELLGWVDQTSLKERHITGLHYNPLTNTFKLGPGVDVNYMLHTQNK.

S-adenosyl-L-methionine-binding residues include arginine 44, glycine 64, aspartate 85, and methionine 129.

It belongs to the methyltransferase superfamily. UbiG/COQ3 family.

The catalysed reaction is a 3-demethylubiquinol + S-adenosyl-L-methionine = a ubiquinol + S-adenosyl-L-homocysteine + H(+). It catalyses the reaction a 3-(all-trans-polyprenyl)benzene-1,2-diol + S-adenosyl-L-methionine = a 2-methoxy-6-(all-trans-polyprenyl)phenol + S-adenosyl-L-homocysteine + H(+). Its pathway is cofactor biosynthesis; ubiquinone biosynthesis. Functionally, O-methyltransferase that catalyzes the 2 O-methylation steps in the ubiquinone biosynthetic pathway. This is Ubiquinone biosynthesis O-methyltransferase from Escherichia coli O8 (strain IAI1).